Here is a 284-residue protein sequence, read N- to C-terminus: Undecaprenyl-diphosphatase (284 aa).

Transmembrane regions (helical) follow at residues 1-21 (MNWLHAIILGIVEGITEFLPV), 43-63 (ITAFTAIIQVGAIIAAILYFW), 88-108 (YTLGWGIILGSIPVGVVGLVF), 116-136 (LSSLWVVAIALILWSGVMWLG), 149-169 (IGIVDAIVIGCFQALAPLFPG), 193-213 (LSFFMGIPALVAAGIYESVSA), 225-245 (VAIGWGPTILATVVSLIVAYV), and 259-279 (FTGFMWYRVVVGLIIIGLILS).

Belongs to the UppP family.

The protein resides in the cell membrane. It catalyses the reaction di-trans,octa-cis-undecaprenyl diphosphate + H2O = di-trans,octa-cis-undecaprenyl phosphate + phosphate + H(+). Functionally, catalyzes the dephosphorylation of undecaprenyl diphosphate (UPP). Confers resistance to bacitracin. This chain is Undecaprenyl-diphosphatase, found in Cutibacterium acnes (strain DSM 16379 / KPA171202) (Propionibacterium acnes).